The chain runs to 131 residues: MSMQDPIADMLTRIRNGQAANKVGVTMPSSKLKVAIAEVLKEEGFINSFTVEGDITNPTLVIILKYYQGKPVVERIDRISCPSLRIYKKRDALPKVMGGMGIAIISTSKGVITDRAARQAGLGGEVICYVA.

It belongs to the universal ribosomal protein uS8 family. Part of the 30S ribosomal subunit. Contacts proteins S5 and S12.

One of the primary rRNA binding proteins, it binds directly to 16S rRNA central domain where it helps coordinate assembly of the platform of the 30S subunit. This is Small ribosomal subunit protein uS8 from Hamiltonella defensa subsp. Acyrthosiphon pisum (strain 5AT).